The primary structure comprises 351 residues: c-di-GMP synthase (351 aa).

The protein belongs to the CD-NTase family. E05 subfamily.

The catalysed reaction is 2 GTP = 3',3'-c-di-GMP + 2 diphosphate. In terms of biological role, cyclic nucleotide synthase (second messenger synthase) of a CBASS antivirus system. CBASS (cyclic oligonucleotide-based antiphage signaling system) provides immunity against bacteriophage. The CD-NTase protein synthesizes cyclic nucleotides in response to infection; these serve as specific second messenger signals. The signals activate a diverse range of effectors, leading to bacterial cell death and thus abortive phage infection. A type I-D(GG) CBASS system. Cyclic dinucleotide synthase that catalyzes the synthesis of c-di-GMP, has no activity with other NTP substrates. This Capnocytophaga granulosa (strain ATCC 51502 / DSM 11449 / JCM 8566 / LMG 16022 / NCTC 12948 / B0611) protein is c-di-GMP synthase (cdnE).